Consider the following 58-residue polypeptide: Small ribosomal subunit protein bS21 (58 aa).

A disordered region spans residues 35–58; that stretch reads REHYEKPSVKRKKKSEAARKRKFK. Residues 43–58 show a composition bias toward basic residues; the sequence is VKRKKKSEAARKRKFK.

It belongs to the bacterial ribosomal protein bS21 family.

The sequence is that of Small ribosomal subunit protein bS21 from Ruminiclostridium cellulolyticum (strain ATCC 35319 / DSM 5812 / JCM 6584 / H10) (Clostridium cellulolyticum).